Reading from the N-terminus, the 401-residue chain is Succinyl-diaminopimelate desuccinylase (401 aa).

Position 82 (His-82) interacts with Zn(2+). Asp-84 is an active-site residue. Residue Asp-115 participates in Zn(2+) binding. Catalysis depends on Glu-149, which acts as the Proton acceptor. The Zn(2+) site is built by Glu-150, Glu-178, and His-364.

Belongs to the peptidase M20A family. DapE subfamily. As to quaternary structure, homodimer. Zn(2+) serves as cofactor. It depends on Co(2+) as a cofactor.

It catalyses the reaction N-succinyl-(2S,6S)-2,6-diaminopimelate + H2O = (2S,6S)-2,6-diaminopimelate + succinate. Its pathway is amino-acid biosynthesis; L-lysine biosynthesis via DAP pathway; LL-2,6-diaminopimelate from (S)-tetrahydrodipicolinate (succinylase route): step 3/3. In terms of biological role, catalyzes the hydrolysis of N-succinyl-L,L-diaminopimelic acid (SDAP), forming succinate and LL-2,6-diaminopimelate (DAP), an intermediate involved in the bacterial biosynthesis of lysine and meso-diaminopimelic acid, an essential component of bacterial cell walls. This chain is Succinyl-diaminopimelate desuccinylase, found in Verminephrobacter eiseniae (strain EF01-2).